Here is a 750-residue protein sequence, read N- to C-terminus: Photosystem I P700 chlorophyll a apoprotein A1 (750 aa).

8 helical membrane passes run 70-93 (VFSA…FHGA), 156-179 (LYCT…FHYH), 195-219 (LNHH…HVSL), 291-309 (IIHH…GHMY), 346-369 (WHAQ…HHMY), 385-411 (LSLF…IFMV), 433-455 (AIIS…LYIH), and 531-549 (FLVH…LILL). 2 residues coordinate [4Fe-4S] cluster: C573 and C582. The next 2 membrane-spanning stretches (helical) occupy residues 589–610 (HVFL…HFSW) and 664–686 (LSAY…MFLF). Residue H675 coordinates chlorophyll a'. The chlorophyll a site is built by M683 and Y691. Residue W692 coordinates phylloquinone. A helical membrane pass occupies residues 724-744 (AVGVTHYLLGGIATTWAFFLA).

The protein belongs to the PsaA/PsaB family. In terms of assembly, the PsaA/B heterodimer binds the P700 chlorophyll special pair and subsequent electron acceptors. PSI consists of a core antenna complex that captures photons, and an electron transfer chain that converts photonic excitation into a charge separation. The eukaryotic PSI reaction center is composed of at least 11 subunits. The cofactor is P700 is a chlorophyll a/chlorophyll a' dimer, A0 is one or more chlorophyll a, A1 is one or both phylloquinones and FX is a shared 4Fe-4S iron-sulfur center..

It is found in the plastid. It localises to the chloroplast thylakoid membrane. The catalysed reaction is reduced [plastocyanin] + hnu + oxidized [2Fe-2S]-[ferredoxin] = oxidized [plastocyanin] + reduced [2Fe-2S]-[ferredoxin]. Its function is as follows. PsaA and PsaB bind P700, the primary electron donor of photosystem I (PSI), as well as the electron acceptors A0, A1 and FX. PSI is a plastocyanin-ferredoxin oxidoreductase, converting photonic excitation into a charge separation, which transfers an electron from the donor P700 chlorophyll pair to the spectroscopically characterized acceptors A0, A1, FX, FA and FB in turn. Oxidized P700 is reduced on the lumenal side of the thylakoid membrane by plastocyanin. The protein is Photosystem I P700 chlorophyll a apoprotein A1 of Phaseolus vulgaris (Kidney bean).